Reading from the N-terminus, the 198-residue chain is MTKPTLTYFPVRGRVQFPRCLLEYLGEEYNFNEVKTISDDLRKQLLFKQLPLYQEGDFKIVQTPAIIDYISEKHDFRGKTKEERARAHQCLAGIMEVLDHCLGYSFKMDKQQQEKFRNESPIKKFFEGFEMVLSQNKYLASGEKETYVDLMAFVMVDYVTNLGLMPSGDYPKLISLKKHYESSPQLKKYLESRPQSNF.

Positions 2 to 78 (TKPTLTYFPV…YISEKHDFRG (77 aa)) constitute a GST N-terminal domain. Residues Tyr8, Arg42, 49–50 (QL), and 62–63 (QT) each bind glutathione. The region spanning 80-198 (TKEERARAHQ…YLESRPQSNF (119 aa)) is the GST C-terminal domain.

The protein belongs to the GST superfamily. Alpha family.

The enzyme catalyses RX + glutathione = an S-substituted glutathione + a halide anion + H(+). Its function is as follows. Conjugation of reduced glutathione to a wide number of exogenous and endogenous hydrophobic electrophiles. The sequence is that of Putative glutathione S-transferase alpha-5 (gsta5) from Dictyostelium discoideum (Social amoeba).